We begin with the raw amino-acid sequence, 1429 residues long: Inactive rhomboid protein 1 (1429 aa).

3 disordered regions span residues 1–36 (MSSNGSDLGHNNRRNEKGNPDSVHSSMRGSMSSTRR), 560–579 (GNEDAGQSNGTNGNYAPDRP), and 740–766 (TSALNSGGNATSDINLTGDQSSHQPGA). The Cytoplasmic segment spans residues 1-843 (MSSNGSDLGH…RPFFTYWINT (843 aa)). The span at 22 to 33 (SVHSSMRGSMSS) shows a compositional bias: low complexity. Composition is skewed to polar residues over residues 564 to 573 (AGQSNGTNGN) and 740 to 763 (TSALNSGGNATSDINLTGDQSSHQ). Residues 844-864 (VQVVVLILSIICYGIAPIGIG) traverse the membrane as a helical segment. At 865–1099 (SEQKTGQVLV…PDQLYRLLTS (235 aa)) the chain is on the lumenal side. The chain crosses the membrane as a helical span at residues 1100–1120 (LCMHAGILHLAITLIFQHLFL). At 1121–1131 (ADLERLIGTVR) the chain is on the cytoplasmic side. The helical transmembrane segment at 1132–1152 (TAIVYIMSGFAGNLTSAILVP) threads the bilayer. Over 1153–1156 (HRPE) the chain is Lumenal. The helical transmembrane segment at 1157 to 1177 (VGPSASLSGVVASLIALLVWM) threads the bilayer. The Cytoplasmic segment spans residues 1178 to 1186 (HWKYLHKPH). A helical membrane pass occupies residues 1187–1207 (IALFKLLLLCSVLVGIGTLPY). The Lumenal portion of the chain corresponds to 1208 to 1210 (QLN). Residues 1211 to 1231 (FLGLLAGVICGCLLTMSLVPF) form a helical membrane-spanning segment. Residues 1232–1245 (TTFSKYGRKKKINL) lie on the Cytoplasmic side of the membrane. Residues 1246-1266 (IWTCVLFHVVVYTAMIVTFYI) traverse the membrane as a helical segment. Residues 1267-1429 (HPSEFHSISF…INNNTEFNVL (163 aa)) are Lumenal-facing.

This sequence belongs to the peptidase S54 family. In terms of tissue distribution, specifically expressed in the nervous system and in brain.

The protein localises to the endoplasmic reticulum membrane. Rhomboid protease-like protein which has no protease activity but regulates the secretion of several ligands of the epidermal growth factor receptor. Indirectly activates the epidermal growth factor receptor signaling pathway and may thereby regulate sleep, cell survival, proliferation and migration. The polypeptide is Inactive rhomboid protein 1 (rho-5) (Drosophila melanogaster (Fruit fly)).